The sequence spans 304 residues: Dihydroorotate dehydrogenase B (NAD(+)), catalytic subunit (304 aa).

Residues Ser-21 and 45 to 46 (KA) contribute to the FMN site. Substrate-binding positions include Lys-45 and 69-73 (NAIGL). The FMN site is built by Asn-99 and Asn-127. Asn-127 lines the substrate pocket. Residue Cys-130 is the Nucleophile of the active site. Residues Lys-165 and Ile-191 each coordinate FMN. 192-193 (NT) serves as a coordination point for substrate. FMN is bound by residues Gly-217, 243–244 (GG), and 265–266 (GT).

It belongs to the dihydroorotate dehydrogenase family. Type 1 subfamily. Heterotetramer of 2 PyrK and 2 PyrD type B subunits. It depends on FMN as a cofactor.

Its subcellular location is the cytoplasm. It carries out the reaction (S)-dihydroorotate + NAD(+) = orotate + NADH + H(+). The protein operates within pyrimidine metabolism; UMP biosynthesis via de novo pathway; orotate from (S)-dihydroorotate (NAD(+) route): step 1/1. Functionally, catalyzes the conversion of dihydroorotate to orotate with NAD(+) as electron acceptor. This chain is Dihydroorotate dehydrogenase B (NAD(+)), catalytic subunit (pyrD), found in Listeria welshimeri serovar 6b (strain ATCC 35897 / DSM 20650 / CCUG 15529 / CIP 8149 / NCTC 11857 / SLCC 5334 / V8).